The chain runs to 122 residues: uncharacterized protein (122 aa).

The residue at position 55 (threonine 55) is a Phosphothreonine. 5 positions are modified to phosphoserine: serine 72, serine 86, serine 96, serine 112, and serine 118.

The protein resides in the cytoplasm. This is an uncharacterized protein from Homo sapiens (Human).